Consider the following 1396-residue polypeptide: DNA-directed RNA polymerase subunit beta (1396 aa).

The protein belongs to the RNA polymerase beta chain family. As to quaternary structure, the RNAP catalytic core consists of 2 alpha, 1 beta, 1 beta' and 1 omega subunit. When a sigma factor is associated with the core the holoenzyme is formed, which can initiate transcription.

The enzyme catalyses RNA(n) + a ribonucleoside 5'-triphosphate = RNA(n+1) + diphosphate. DNA-dependent RNA polymerase catalyzes the transcription of DNA into RNA using the four ribonucleoside triphosphates as substrates. The protein is DNA-directed RNA polymerase subunit beta of Erythrobacter litoralis (strain HTCC2594).